A 386-amino-acid chain; its full sequence is Glucose-1-phosphate adenylyltransferase (386 aa).

Alpha-D-glucose 1-phosphate contacts are provided by residues Tyr-100, Gly-165, 180 to 181 (EK), and Ser-191.

The protein belongs to the bacterial/plant glucose-1-phosphate adenylyltransferase family. In terms of assembly, homotetramer.

It catalyses the reaction alpha-D-glucose 1-phosphate + ATP + H(+) = ADP-alpha-D-glucose + diphosphate. It functions in the pathway glycan biosynthesis; glycogen biosynthesis. Functionally, involved in the biosynthesis of ADP-glucose, a building block required for the elongation reactions to produce glycogen. Catalyzes the reaction between ATP and alpha-D-glucose 1-phosphate (G1P) to produce pyrophosphate and ADP-Glc. The chain is Glucose-1-phosphate adenylyltransferase from Clostridium botulinum (strain Eklund 17B / Type B).